Reading from the N-terminus, the 451-residue chain is Tubulin gamma-1 chain (451 aa).

Residue 142–148 (AGGTGSG) coordinates GTP.

Belongs to the tubulin family.

The protein resides in the cytoplasm. It is found in the cytoskeleton. It localises to the microtubule organizing center. The protein localises to the centrosome. Its subcellular location is the spindle. In terms of biological role, tubulin is the major constituent of microtubules. The gamma chain is found at microtubule organizing centers (MTOC) such as the spindle poles or the centrosome, suggesting that it is involved in the minus-end nucleation of microtubule assembly. This chain is Tubulin gamma-1 chain (tubg1), found in Xenopus laevis (African clawed frog).